Reading from the N-terminus, the 363-residue chain is Copper-containing nitrite reductase (363 aa).

A signal peptide spans 1 to 24; the sequence is MSVFRSVLGACVLLGSCASSLALA. Plastocyanin-like domains follow at residues 25–193 and 194–363; these read GGAE…YDRV and YTIG…EPKQ. Histidine 113, histidine 118, histidine 153, cysteine 154, histidine 163, methionine 168, and histidine 324 together coordinate Cu cation.

Belongs to the multicopper oxidase family. As to quaternary structure, homotrimer. It depends on Cu(2+) as a cofactor. Cu(+) is required as a cofactor. The cofactor is FAD.

It is found in the periplasm. It carries out the reaction nitric oxide + Fe(III)-[cytochrome c] + H2O = Fe(II)-[cytochrome c] + nitrite + 2 H(+). Its pathway is nitrogen metabolism; nitrate reduction (denitrification); dinitrogen from nitrate: step 2/4. This Pseudomonas chlororaphis (Pseudomonas aureofaciens) protein is Copper-containing nitrite reductase (nirK).